We begin with the raw amino-acid sequence, 685 residues long: Stromal interaction molecule 1 (685 aa).

A signal peptide spans 1–22 (MDVCARLALWLLWGLLLHQGQS). Residues 23–213 (LSHSHSEKNT…LLTRHNHLKD (191 aa)) lie on the Extracellular side of the membrane. The disordered stretch occupies residues 24–43 (SHSHSEKNTGASSGATSEES). Over residues 32 to 41 (TGASSGATSE) the composition is skewed to low complexity. EF-hand domains follow at residues 64 to 97 (SFEA…EDLN) and 102 to 126 (TVKH…AWKS). Positions 76, 78, 80, 82, and 87 each coordinate Ca(2+). N131 and N171 each carry an N-linked (GlcNAc...) asparagine glycan. The SAM domain occupies 132 to 200 (WTVDEVIQWL…QLKALDTVLF (69 aa)). A helical transmembrane segment spans residues 214–234 (FMLVVSIVIGVGGCWFAYIQN). Topologically, residues 235–685 (RYSKEHMKKM…LKIFKKPLKK (451 aa)) are cytoplasmic. Residues 248-442 (LEGLHRAEQS…IEILCGFQIV (195 aa)) are a coiled coil. Phosphoserine is present on S257. The SOAR/CAD stretch occupies residues 344-442 (PEALQKWLQL…IEILCGFQIV (99 aa)). The interval 475–483 (DDVDDMDEE) is contributes to fast Ca(2+)-dependent inactivation of CRAC channels. The span at 490 to 499 (MQSPSLQSSV) shows a compositional bias: low complexity. The segment at 490 to 541 (MQSPSLQSSVRQRLTEPQLGLGSQRDLTHSDSESSLHMSDRQRVAPKPPQMG) is disordered. T504 is subject to Phosphothreonine. S512 bears the Phosphoserine mark. The segment covering 515–532 (DLTHSDSESSLHMSDRQR) has biased composition (basic and acidic residues). The residue at position 517 (T517) is a Phosphothreonine. Phosphoserine is present on residues S519, S521, S523, S524, S567, S575, S602, S608, S618, S621, and S628. The disordered stretch occupies residues 596-685 (LMELNPSVPP…LKIFKKPLKK (90 aa)). Low complexity predominate over residues 608–620 (SPLLDSSHSLSPS). A Microtubule tip localization signal motif is present at residues 642-645 (TRIP). Positions 655–666 (EEDNGSIGEETD) are enriched in acidic residues. S660 is modified (phosphoserine). Phosphothreonine is present on T665. The residue at position 668 (S668) is a Phosphoserine. Positions 670 to 685 (GRKKFPLKIFKKPLKK) are enriched in basic residues. The interval 672–685 (KKFPLKIFKKPLKK) is required for generation of inwardly rectifying CRAC currents.

Monomer in the presence of Ca(2+). It oligomerizes in absence of Ca(2+). Forms homooligomers and heterooligomers with STIM2. Interacts with pore-forming subunits of CRAC channels, ORAI1, ORAI2 and ORAI3; this interaction is potentiated upon Ca(2+) store depletion. Interacts (via the transmembrane region and the SOAR/CAD domain) with SPPL3; the interaction promotes the binding of STIM1 to ORAI1. Interacts with ORAI1. Interacts with MAPRE1; probably required for targeting to the growing microtubule plus ends. Interacts with CRACR2A/EFCAB4B; the interaction is direct and takes place in absence of Ca(2+). Forms a complex with CRACR2A/EFCAB4B and ORAI1 at low concentration of Ca(2+), the complex dissociates at elevated Ca(2+) concentrations. Interacts with SARAF, promoting a slow inactivation of STIM1-dependent SOCE activity, possibly by facilitating the deoligomerization of STIM1. Interacts with EFHB; the interaction takes place upon Ca(2+)-store depletion and inhibits the association with SARAF. Interacts with ASPH. Interacts with SLC35G1; intracellular Ca(2+)-dependent. May interact with ATP1A1, ATP2A2, ATP2B1, ATP2B4, KPNB1 and XPO1; through SLC35G1. Interacts with STIMATE, promoting STIM1 conformational switch. Interacts with TMEM178A. Interacts with CASQ1 (via C-terminal end and preferentially with the monomeric form); this interaction increases in response to a depletion of intracellular Ca(2+), decreases both STIM1 aggregation and clustering, interaction of STIM1 with ORAI1 and store-operated Ca(2+) entry (SOCE) activity. Interacts with ADCY8. Interacts with TMEM203. Glycosylation is required for cell surface expression. In terms of processing, phosphorylated predominantly on Ser residues. As to expression, expressed in maturation-stage ameloblasts (at protein level). Expressed in all tissues examined and in many cell types, including bone marrow stroma, fibroblast, B-cell precursors, lymphoma and erythroleukemia.

It is found in the cell membrane. The protein localises to the endoplasmic reticulum membrane. The protein resides in the sarcoplasmic reticulum. Its subcellular location is the cytoplasm. It localises to the cytoskeleton. Functionally, acts as a Ca(2+) sensor that gates two major inward rectifying Ca(2+) channels at the plasma membrane: Ca(2+) release-activated Ca(2+) (CRAC) channels and arachidonate-regulated Ca(2+)-selective (ARC) channels. Plays a role in mediating store-operated Ca(2+) entry (SOCE), a Ca(2+) influx following depletion of intracellular Ca(2+) stores. Upon Ca(2+) depletion, translocates from the endoplasmic reticulum to the plasma membrane where it activates CRAC channel pore-forming subunits ORA1, ORA2 and ORAI3 to generate sustained and oscillatory Ca(2+) entry. Involved in enamel formation. The chain is Stromal interaction molecule 1 (Stim1) from Mus musculus (Mouse).